The sequence spans 249 residues: Pleckstrin homology domain-containing family F member 2 (249 aa).

A PH domain is found at 35 to 131 (VLIGEGVLTK…WMNHINKCVS (97 aa)). Residues 152–212 (DSEATVCMRC…ICDSCYDLLS (61 aa)) form an FYVE-type zinc finger. Positions 158, 161, 175, 178, 183, 186, 204, and 207 each coordinate Zn(2+). The segment covering 219–232 (CQSTRSDSYSQSPK) has biased composition (polar residues). The segment at 219–249 (CQSTRSDSYSQSPKSSLNDASDDDDDEDSSD) is disordered. A compositionally biased stretch (acidic residues) spans 238-249 (ASDDDDDEDSSD).

The protein localises to the early endosome membrane. Its subcellular location is the endoplasmic reticulum. Functionally, may play a role in early endosome fusion upstream of RAB5, hence regulating receptor trafficking and fluid-phase transport. Enhances cellular sensitivity to TNF-induced apoptosis. The sequence is that of Pleckstrin homology domain-containing family F member 2 (PLEKHF2) from Gallus gallus (Chicken).